The chain runs to 467 residues: DNA repair protein RadA (467 aa).

A C4-type zinc finger spans residues 10–27; the sequence is CQNCGAVHSRWAGKCDSC. 98–105 lines the ATP pocket; the sequence is GDPGIGKS. Positions 260–264 match the RadA KNRFG motif motif; that stretch reads KNRFG. The interval 359–467 is lon-protease-like; it reads DVYLNVAGGY…RIAASGAGKK (109 aa).

This sequence belongs to the RecA family. RadA subfamily.

Its function is as follows. DNA-dependent ATPase involved in processing of recombination intermediates, plays a role in repairing DNA breaks. Stimulates the branch migration of RecA-mediated strand transfer reactions, allowing the 3' invading strand to extend heteroduplex DNA faster. Binds ssDNA in the presence of ADP but not other nucleotides, has ATPase activity that is stimulated by ssDNA and various branched DNA structures, but inhibited by SSB. Does not have RecA's homology-searching function. The sequence is that of DNA repair protein RadA from Brucella abortus (strain 2308).